Here is a 115-residue protein sequence, read N- to C-terminus: Cyclin-dependent kinase 2-associated protein 1 (115 aa).

Positions 20 to 25 (GSVHSP) are interaction with CDK2AP2. Residue S46 is modified to Phosphoserine; by IKKE.

The protein belongs to the CDK2AP family. As to quaternary structure, homodimer. Component of the nucleosome remodeling and deacetylase (NuRD) repressor complex, composed of core proteins MTA1, MTA2, MTA3, RBBP4, RBBP7, HDAC1, HDAC2, MBD2, MBD3, and peripherally associated proteins CDK2AP1, CDK2AP2, GATAD2A, GATAD2B, CHD3, CHD4 and CHD5. The exact stoichiometry of the NuRD complex is unknown, and some subunits such as MBD2 and MBD3, GATAD2A and GATAD2B, and CHD3, CHD4 and CHD5 define mutually exclusive NuRD complexes. Interacts with monomeric unphosphorylated CDK2. Interacts with CDK2AP2. Interacts with GATAD2A. Interacts with HDAC1. Interacts with HDAC2. Interacts with MBD2. Interacts with MBD3. Interacts with RBBP4. Interacts with RBBP7. In terms of processing, phosphorylated in vitro by IKBKE at Ser-46.

It is found in the nucleus. It localises to the chromosome. Inhibitor of cyclin-dependent kinase CDK2. Also acts as a component of the histone deacetylase NuRD complex which participates in the remodeling of chromatin. The protein is Cyclin-dependent kinase 2-associated protein 1 (CDK2AP1) of Homo sapiens (Human).